A 427-amino-acid polypeptide reads, in one-letter code: Peptidase B (427 aa).

Mn(2+) contacts are provided by Lys195 and Asp200. The active site involves Lys207. Residues Asp218, Asp277, and Glu279 each coordinate Mn(2+). The active site involves Arg281.

This sequence belongs to the peptidase M17 family. As to quaternary structure, homohexamer. Mn(2+) is required as a cofactor.

Its subcellular location is the cytoplasm. The enzyme catalyses Release of an N-terminal amino acid, Xaa, from a peptide or arylamide. Xaa is preferably Glu or Asp but may be other amino acids, including Leu, Met, His, Cys and Gln.. Its function is as follows. Probably plays an important role in intracellular peptide degradation. This is Peptidase B from Salmonella dublin (strain CT_02021853).